Reading from the N-terminus, the 805-residue chain is Angiotensin-converting enzyme 2 (805 aa).

An N-terminal signal peptide occupies residues 1 to 17; it reads MSSSSWLLLSLVAVTTA. Residues 18–740 are Extracellular-facing; sequence QSLTEENAKT…LEPPYQPPVT (723 aa). The Peptidase M2 domain maps to 19 to 607; the sequence is SLTEENAKTF…QNRNSFVGWN (589 aa). Asparagine 53 carries an N-linked (GlcNAc...) asparagine glycan. A disulfide bridge connects residues cysteine 133 and cysteine 141. Arginine 169 serves as a coordination point for chloride. Substrate is bound by residues arginine 273 and 345-346; that span reads HP. Cysteine 344 and cysteine 361 are disulfide-bonded. Histidine 374 contributes to the Zn(2+) binding site. The Proton acceptor role is filled by glutamate 375. Zn(2+) contacts are provided by histidine 378 and glutamate 402. The chloride site is built by tryptophan 477 and lysine 481. The active-site Proton donor is the histidine 505. Tyrosine 515 provides a ligand contact to substrate. Cysteines 530 and 542 form a disulfide. N-linked (GlcNAc...) asparagine glycans are attached at residues asparagine 536 and asparagine 546. One can recognise a Collectrin-like domain in the interval 614 to 805; it reads ADQSIKVRIS…QNSDDAQTSF (192 aa). The tract at residues 652 to 659 is essential for cleavage by ADAM17; it reads RKYFSIIK. Residues asparagine 660 and asparagine 690 are each glycosylated (N-linked (GlcNAc...) asparagine). An essential for cleavage by TMPRSS11D and TMPRSS2 region spans residues 697–716; that stretch reads RSEVEDAIRMSRGRINDVFG. A helical transmembrane segment spans residues 741 to 761; the sequence is IWLIIFGVVMALVVVGIIILI. Residues 762–805 are Cytoplasmic-facing; the sequence is VTGIKGRKKKNETKREENPYDSMDIGKGESNAGFQNSDDAQTSF. The disordered stretch occupies residues 771–805; it reads KNETKREENPYDSMDIGKGESNAGFQNSDDAQTSF. Residues 778–786 carry the LIR motif; it reads ENPYDSMDI. Tyrosine 781 carries the post-translational modification Phosphotyrosine. The short motif at 781–784 is the Endocytic sorting signal element; it reads YDSM. The SH2-binding motif lies at 781 to 785; that stretch reads YDSMD. Phosphoserine is present on serine 783. Residue lysine 788 forms a Glycyl lysine isopeptide (Lys-Gly) (interchain with G-Cter in ubiquitin) linkage. The PTB signature appears at 792-795; that stretch reads NAGF. Residues 793 to 805 show a composition bias toward polar residues; it reads AGFQNSDDAQTSF. Residues 803-805 carry the PDZ-binding motif; that stretch reads TSF.

The protein belongs to the peptidase M2 family. In terms of assembly, homodimer. Interacts with the catalytically active form of TMPRSS2. Interacts with SLC6A19; this interaction is essential for expression and function of SLC6A19 in intestine. Interacts with ITGA5:ITGB1. Probably interacts (via endocytic sorting signal motif) with AP2M1; the interaction is inhibited by phosphorylation of Tyr-781. Interacts (via PDZ-binding motif) with NHERF1 (via PDZ domains); the interaction may enhance ACE2 membrane residence. (Microbial infection) Weakly interacts with SARS-CoV S protein. It depends on Zn(2+) as a cofactor. The cofactor is chloride. Post-translationally, proteolytic cleavage by ADAM17 generates a secreted form. Also cleaved by serine proteases: TMPRSS2, TMPRSS11D and HPN/TMPRSS1. Phosphorylated. Phosphorylation at Tyr-781 probably inhibits interaction with AP2M1 and enables interactions with proteins containing SH2 domains. In terms of processing, ubiquitinated. Ubiquitinated on Lys-788 via 'Lys-48'-linked ubiquitin. 'Lys-48'-linked deubiquitinated by USP50 on the Lys-788; leading to its stabilization. Expressed in heart, kidney and forebrain (at protein level). Expressed in the small intestine, with expression in the intestinal brush border (at protein level). Ubiquitously expressed, with highest levels in ileum, kidney and lung. In lung, expressed on vascular endothelial and airway epithelial cells. Also expressed at high levels in lung secretory club and goblet cells as well as in alveolar type 2 cells.

The protein resides in the secreted. It is found in the cell membrane. The protein localises to the cytoplasm. It localises to the cell projection. Its subcellular location is the cilium. The protein resides in the apical cell membrane. It carries out the reaction angiotensin II + H2O = angiotensin-(1-7) + L-phenylalanine. The enzyme catalyses angiotensin I + H2O = angiotensin-(1-9) + L-leucine. It catalyses the reaction bradykinin(1-8) + H2O = bradykinin(1-7) + L-phenylalanine. The catalysed reaction is neurotensin + H2O = neurotensin-(1-12) + L-leucine. It carries out the reaction kinetensin + H2O = kinetensin-(1-8) + L-leucine. The enzyme catalyses dynorphin A-(1-13) + H2O = dynorphin A-(1-12) + L-lysine. It catalyses the reaction apelin-13 + H2O = apelin-12 + L-phenylalanine. The catalysed reaction is [Pyr1]apelin-13 + H2O = [Pyr1]apelin-12 + L-phenylalanine. It carries out the reaction apelin-17 + H2O = apelin-16 + L-phenylalanine. Functionally, essential counter-regulatory carboxypeptidase of the renin-angiotensin hormone system that is a critical regulator of blood volume, systemic vascular resistance, and thus cardiovascular homeostasis. Converts angiotensin I to angiotensin 1-9, a nine-amino acid peptide with anti-hypertrophic effects in cardiomyocytes, and angiotensin II to angiotensin 1-7, which then acts as a beneficial vasodilator and anti-proliferation agent, counterbalancing the actions of the vasoconstrictor angiotensin II. Also removes the C-terminal residue from three other vasoactive peptides, neurotensin, kinetensin, and des-Arg bradykinin, but is not active on bradykinin. Also cleaves other biological peptides, such as apelins, casomorphins and dynorphin A. By cleavage of angiotensin II, may be an important regulator of heart function. By cleavage of angiotensin II, may also have a protective role in acute lung injury. Plays an important role in amino acid transport by acting as binding partner of amino acid transporter SLC6A19, regulating its trafficking on the cell surface and its activity. The polypeptide is Angiotensin-converting enzyme 2 (Ace2) (Mus musculus (Mouse)).